The sequence spans 2131 residues: Nonribosomal peptide synthetase criC (2131 aa).

An adenylation 1 region spans residues 13–407; the sequence is FSQQCFQHPD…GRRDRVTKIR (395 aa). Residues 525–601 enclose the Carrier 1 domain; it reads SGPLTIDQTI…ALVEKNRHET (77 aa). Ser562 carries the post-translational modification O-(pantetheine 4'-phosphoryl)serine. The disordered stretch occupies residues 598 to 627; that stretch reads RHETENRPDSSAFATRTPEESSMPTQGPVT. The tract at residues 625–1018 is condensation 1; it reads PVTPLQKRMV…YMSLLDAFLD (394 aa). The adenylation 2 stretch occupies residues 1069–1447; that stretch reads ASLHPTHIAV…GRKDRQVKVR (379 aa). In terms of domain architecture, Carrier 2 spans 1569 to 1647; sequence SSEAHLEKLI…DLITLVAQQQ (79 aa). The residue at position 1607 (Ser1607) is an O-(pantetheine 4'-phosphoryl)serine. The interval 1688-2086 is condensation 2; that stretch reads SQSQSTFNVP…EALLLECFRM (399 aa).

Belongs to the NRP synthetase family. It depends on pantetheine 4'-phosphate as a cofactor.

The catalysed reaction is L-tryptophan + L-alanine + 2 ATP = cyclo(L-tryptophyl-L-alanyl) + 2 ADP + 2 phosphate + 2 H(+). Its pathway is secondary metabolite biosynthesis. The protein operates within alkaloid biosynthesis. In terms of biological role, nonribosomal peptide synthetase; part of the gene cluster that mediates the biosynthesis of echinulin family alkaloid. The pathway begins with the biosynthesis of the cyclic dipeptide cyclo-L-Trp-L-Ala (cyclo-TA) by the NRPS criC via condensation of L-alanine and L-tryptophan. The prenyltransferase criA then catalyzes the first prenylation step, a reverse prenylation reaction at C2, to yield preechinulin. Preechinulin is the substrate of the cytochrome P450 monooxygenase criE that catalyzes the formation of the double bond between C10 and C11 to produce neoechulin A. The unique prenyltransferase criF functions as a competitive enzyme with criE for preechinulin metabolization and uses preechinulin for effective regiospecific prenylations. Preechinulin is prenylated by criF at C5 or C7. C7-prenylation leads to accumulation of tardioxopiperazine B without further modification by criF. In contrast, the C5-prenylated tardioxopiperazine A can be prenylated again by criF, predominantly at C7 to form echinulin or less frequently at C4 to give variecolorin L. CriF also accepts neoechilunin A to produce varlecolorin G (prenylation at C5) or isoechinulin A (prenylation at C7). CriF further converts isoechinulin A into dehydroechinulin. Moreover, a yet unidentified enzyme can also convert neoechilunin A into neoechilunin B by introducing a double bond between positions C14 and C17 and thus provides a further substrate to criF for C5 and C7 prenylation. In Aspergillus cristatus (Chinese Fuzhuan brick tea-fermentation fungus), this protein is Nonribosomal peptide synthetase criC.